Reading from the N-terminus, the 124-residue chain is MPTIQQLVRKGRRDKISKVKTAALKGSPQRRGVCTRVYTTTPKKPNSALRKVARVKLTSQVEVTAYIPGEGHNLQEHSMVLVRGGRVKDLPGVRYKIIRGSLDTQGVKNRKQARSRYGAKKEKG.

The interval 105–124 (QGVKNRKQARSRYGAKKEKG) is disordered. Residues 108 to 118 (KNRKQARSRYG) are compositionally biased toward basic residues.

Belongs to the universal ribosomal protein uS12 family. In terms of assembly, part of the 30S ribosomal subunit. Contacts proteins S8 and S17. May interact with IF1 in the 30S initiation complex.

Its function is as follows. With S4 and S5 plays an important role in translational accuracy. Interacts with and stabilizes bases of the 16S rRNA that are involved in tRNA selection in the A site and with the mRNA backbone. Located at the interface of the 30S and 50S subunits, it traverses the body of the 30S subunit contacting proteins on the other side and probably holding the rRNA structure together. The combined cluster of proteins S8, S12 and S17 appears to hold together the shoulder and platform of the 30S subunit. The chain is Small ribosomal subunit protein uS12 (rpsL) from Mycobacterium bovis (strain ATCC BAA-935 / AF2122/97).